The primary structure comprises 554 residues: Potassium-transporting ATPase potassium-binding subunit (554 aa).

Transmembrane regions (helical) follow at residues 3-23 (PVLA…LAHV), 60-80 (PAYL…LYLL), 131-151 (GLAV…VALV), 174-194 (VRVL…CGVI), 252-272 (LFEI…FGIM), 279-299 (GYAI…LMMW), 323-343 (FGIG…TGAV), 352-372 (GLGG…PGGV), 375-395 (GLYG…LMVG), 412-432 (FAAC…AAAM), 481-501 (LGLA…ALAG), and 522-542 (LFAG…YFPA).

The protein belongs to the KdpA family. The system is composed of three essential subunits: KdpA, KdpB and KdpC.

It localises to the cell membrane. Functionally, part of the high-affinity ATP-driven potassium transport (or Kdp) system, which catalyzes the hydrolysis of ATP coupled with the electrogenic transport of potassium into the cytoplasm. This subunit binds the extracellular potassium ions and delivers the ions to the membrane domain of KdpB through an intramembrane tunnel. This is Potassium-transporting ATPase potassium-binding subunit from Streptomyces coelicolor (strain ATCC BAA-471 / A3(2) / M145).